A 601-amino-acid polypeptide reads, in one-letter code: Proline--tRNA ligase (601 aa).

It belongs to the class-II aminoacyl-tRNA synthetase family. ProS type 1 subfamily. As to quaternary structure, homodimer.

Its subcellular location is the cytoplasm. The enzyme catalyses tRNA(Pro) + L-proline + ATP = L-prolyl-tRNA(Pro) + AMP + diphosphate. Catalyzes the attachment of proline to tRNA(Pro) in a two-step reaction: proline is first activated by ATP to form Pro-AMP and then transferred to the acceptor end of tRNA(Pro). As ProRS can inadvertently accommodate and process non-cognate amino acids such as alanine and cysteine, to avoid such errors it has two additional distinct editing activities against alanine. One activity is designated as 'pretransfer' editing and involves the tRNA(Pro)-independent hydrolysis of activated Ala-AMP. The other activity is designated 'posttransfer' editing and involves deacylation of mischarged Ala-tRNA(Pro). The misacylated Cys-tRNA(Pro) is not edited by ProRS. The protein is Proline--tRNA ligase of Picosynechococcus sp. (strain ATCC 27264 / PCC 7002 / PR-6) (Agmenellum quadruplicatum).